A 101-amino-acid chain; its full sequence is Ubiquitin-related modifier 1 (101 aa).

Residue Gly-101 is modified to 1-thioglycine. Residue Gly-101 forms a Glycyl lysine isopeptide (Gly-Lys) (interchain with K-? in acceptor proteins) linkage.

It belongs to the URM1 family. In terms of processing, C-terminal thiocarboxylation occurs in 2 steps, it is first acyl-adenylated (-COAMP) via the hesA/moeB/thiF part of the MOCS3 homolog, then thiocarboxylated (-COSH) via the rhodanese domain of the MOCS3 homolog.

The protein resides in the cytoplasm. Its pathway is tRNA modification; 5-methoxycarbonylmethyl-2-thiouridine-tRNA biosynthesis. Its function is as follows. Acts as a sulfur carrier required for 2-thiolation of mcm(5)S(2)U at tRNA wobble positions of cytosolic tRNA(Lys), tRNA(Glu) and tRNA(Gln). Serves as sulfur donor in tRNA 2-thiolation reaction by being thiocarboxylated (-COSH) at its C-terminus by MOCS3. The sulfur is then transferred to tRNA to form 2-thiolation of mcm(5)S(2)U. Also acts as a ubiquitin-like protein (UBL) that is covalently conjugated via an isopeptide bond to lysine residues of target proteins. The thiocarboxylated form serves as substrate for conjugation and oxidative stress specifically induces the formation of UBL-protein conjugates. This Gallus gallus (Chicken) protein is Ubiquitin-related modifier 1.